The chain runs to 345 residues: GDP-mannose transporter (345 aa).

The Cytoplasmic segment spans residues 1–8 (MDNHMLNR). Residues 9-29 (ISKSPILPVVSYCMASILMTL) form a helical membrane-spanning segment. Residues 30 to 40 (TNKYVLSSPGY) lie on the Lumenal side of the membrane. A helical transmembrane segment spans residues 41-61 (NMNFLLLTVQSTVCVAAIGIL). Residues 62–78 (KRLKVINYRDFDFREAK) lie on the Cytoplasmic side of the membrane. The helical transmembrane segment at 79-101 (FWFPISFLLVAMIYTASKALQFL) threads the bilayer. Over 102-104 (SVP) the chain is Lumenal. A helical membrane pass occupies residues 105-127 (VYTIFKNLTIIIIAYGEVLWFGG). The Cytoplasmic portion of the chain corresponds to 128–131 (HVTA). A helical membrane pass occupies residues 132-150 (LTLFSFGLMVLSSIVAAWA). The Lumenal segment spans residues 151–161 (DIQSSSFASQT). The chain crosses the membrane as a helical span at residues 162–182 (LNSGYLWMVLNCLTNAAFVLA). Residues 183 to 194 (MRKRIKLTNFRD) lie on the Cytoplasmic side of the membrane. A helical transmembrane segment spans residues 195 to 215 (FDTMFYNNLLSIPVLVICTLF). Over 216 to 233 (TEDWSAENIAQNFPPDAK) the chain is Lumenal. The helical transmembrane segment at 234-254 (FGVLMAMAISGVSSVGISYTS) threads the bilayer. The Cytoplasmic portion of the chain corresponds to 255–264 (AWCVRVTSST). A helical membrane pass occupies residues 265-285 (TYSMVGALNKLPLAIAGLVFF). The Lumenal segment spans residues 286-288 (DAP). A helical membrane pass occupies residues 289–309 (ITFGSVTAILLGFISGVVYAV). Residues 310–345 (AKSQQQRQKDPATILPMTHNPVSASSQSMRDSLSKS) are Cytoplasmic-facing. The tract at residues 319–345 (DPATILPMTHNPVSASSQSMRDSLSKS) is disordered. The span at 329 to 345 (NPVSASSQSMRDSLSKS) shows a compositional bias: polar residues.

The protein belongs to the TPT transporter family. SLC35D subfamily. In terms of assembly, homooligomer.

Its subcellular location is the golgi apparatus membrane. The protein resides in the cytoplasmic vesicle membrane. It is found in the endoplasmic reticulum membrane. In terms of biological role, involved in the import of GDP-mannose from the cytoplasm into the Golgi lumen. In Schizosaccharomyces pombe (strain 972 / ATCC 24843) (Fission yeast), this protein is GDP-mannose transporter (vrg4).